We begin with the raw amino-acid sequence, 84 residues long: Small ribosomal subunit protein bS18 (84 aa).

The protein belongs to the bacterial ribosomal protein bS18 family. Part of the 30S ribosomal subunit. Forms a tight heterodimer with protein bS6.

Its function is as follows. Binds as a heterodimer with protein bS6 to the central domain of the 16S rRNA, where it helps stabilize the platform of the 30S subunit. The sequence is that of Small ribosomal subunit protein bS18 from Helicobacter hepaticus (strain ATCC 51449 / 3B1).